The chain runs to 289 residues: Phosphatidylserine decarboxylase proenzyme (289 aa).

Residues Asp92, His149, and Ser254 each act as charge relay system; for autoendoproteolytic cleavage activity in the active site. Ser254 functions as the Schiff-base intermediate with substrate; via pyruvic acid; for decarboxylase activity in the catalytic mechanism. Position 254 is a pyruvic acid (Ser); by autocatalysis (Ser254).

This sequence belongs to the phosphatidylserine decarboxylase family. PSD-B subfamily. Prokaryotic type I sub-subfamily. In terms of assembly, heterodimer of a large membrane-associated beta subunit and a small pyruvoyl-containing alpha subunit. Pyruvate serves as cofactor. Is synthesized initially as an inactive proenzyme. Formation of the active enzyme involves a self-maturation process in which the active site pyruvoyl group is generated from an internal serine residue via an autocatalytic post-translational modification. Two non-identical subunits are generated from the proenzyme in this reaction, and the pyruvate is formed at the N-terminus of the alpha chain, which is derived from the carboxyl end of the proenzyme. The autoendoproteolytic cleavage occurs by a canonical serine protease mechanism, in which the side chain hydroxyl group of the serine supplies its oxygen atom to form the C-terminus of the beta chain, while the remainder of the serine residue undergoes an oxidative deamination to produce ammonia and the pyruvoyl prosthetic group on the alpha chain. During this reaction, the Ser that is part of the protease active site of the proenzyme becomes the pyruvoyl prosthetic group, which constitutes an essential element of the active site of the mature decarboxylase.

Its subcellular location is the cell membrane. It catalyses the reaction a 1,2-diacyl-sn-glycero-3-phospho-L-serine + H(+) = a 1,2-diacyl-sn-glycero-3-phosphoethanolamine + CO2. Its pathway is phospholipid metabolism; phosphatidylethanolamine biosynthesis; phosphatidylethanolamine from CDP-diacylglycerol: step 2/2. Catalyzes the formation of phosphatidylethanolamine (PtdEtn) from phosphatidylserine (PtdSer). The chain is Phosphatidylserine decarboxylase proenzyme from Pseudomonas aeruginosa (strain LESB58).